A 184-amino-acid chain; its full sequence is NADH-quinone oxidoreductase subunit B (184 aa).

4 residues coordinate [4Fe-4S] cluster: cysteine 37, cysteine 38, cysteine 103, and cysteine 132. The interval 164 to 184 (HEREEAAKHALPTHSMKGLLR) is disordered.

This sequence belongs to the complex I 20 kDa subunit family. In terms of assembly, NDH-1 is composed of 14 different subunits. Subunits NuoB, C, D, E, F, and G constitute the peripheral sector of the complex. [4Fe-4S] cluster serves as cofactor.

The protein localises to the cell membrane. The enzyme catalyses a quinone + NADH + 5 H(+)(in) = a quinol + NAD(+) + 4 H(+)(out). In terms of biological role, NDH-1 shuttles electrons from NADH, via FMN and iron-sulfur (Fe-S) centers, to quinones in the respiratory chain. The immediate electron acceptor for the enzyme in this species is believed to be a menaquinone. Couples the redox reaction to proton translocation (for every two electrons transferred, four hydrogen ions are translocated across the cytoplasmic membrane), and thus conserves the redox energy in a proton gradient. This chain is NADH-quinone oxidoreductase subunit B, found in Acidothermus cellulolyticus (strain ATCC 43068 / DSM 8971 / 11B).